We begin with the raw amino-acid sequence, 955 residues long: Probable autotransporter YcgV (955 aa).

Positions 616 to 659 are disordered; sequence ASGTVPEPTPNPEPTPAPAQPPIVNPDPTPEPAPTPKPTTTADA. The span at 622 to 652 shows a compositional bias: pro residues; the sequence is EPTPNPEPTPAPAQPPIVNPDPTPEPAPTPK. An Autotransporter domain is found at 687 to 955; it reads NQSKDGNIWL…QVNGGYRFSF (269 aa).

Functionally, upon overexpression shows increased adherence to polyvinyl chloride (PVC) plates, increased mature biofilm formation. The sequence is that of Probable autotransporter YcgV (ycgV) from Escherichia coli (strain K12).